A 98-amino-acid chain; its full sequence is Alpha-elicitin DRE-alpha (98 aa).

Disulfide bonds link Cys-3–Cys-71, Cys-27–Cys-56, and Cys-51–Cys-95.

The protein belongs to the elicitin family.

The protein localises to the secreted. In terms of biological role, induces local and distal defense responses (incompatible hypersensitive reaction) in plants from the solanaceae and cruciferae families. Elicits leaf necrosis and causes the accumulation of pathogenesis-related proteins. Might interact with the lipidic molecules of the plasma membrane. The sequence is that of Alpha-elicitin DRE-alpha from Phytophthora drechsleri.